The following is a 242-amino-acid chain: Cytochrome c oxidase subunit 2 (242 aa).

Topologically, residues 1–30 (MSFYGSRYFGDIVHGELGKDLFRYHGFVMM) are mitochondrial intermembrane. The helical transmembrane segment at 31-47 (VAVAVLVFVMYMGCVIL) threads the bilayer. The Mitochondrial matrix segment spans residues 48-66 (FTKFSYRHFLNRQRLEFWW). A helical transmembrane segment spans residues 67–83 (TIVPMLMLVGLWXPSMI). The Mitochondrial intermembrane segment spans residues 84-242 (NLYYMEEVKR…YFVMWLEALN (159 aa)). Cu cation-binding residues include His-176, Cys-211, Glu-213, Cys-215, His-219, and Met-222. Glu-213 contacts Mg(2+).

The protein belongs to the cytochrome c oxidase subunit 2 family. In terms of assembly, component of the cytochrome c oxidase (complex IV, CIV), a multisubunit enzyme composed of a catalytic core of 3 subunits and several supernumerary subunits. The complex exists as a monomer or a dimer and forms supercomplexes (SCs) in the inner mitochondrial membrane with ubiquinol-cytochrome c oxidoreductase (cytochrome b-c1 complex, complex III, CIII). The cofactor is Cu cation.

Its subcellular location is the mitochondrion inner membrane. The catalysed reaction is 4 Fe(II)-[cytochrome c] + O2 + 8 H(+)(in) = 4 Fe(III)-[cytochrome c] + 2 H2O + 4 H(+)(out). In terms of biological role, component of the cytochrome c oxidase, the last enzyme in the mitochondrial electron transport chain which drives oxidative phosphorylation. The respiratory chain contains 3 multisubunit complexes succinate dehydrogenase (complex II, CII), ubiquinol-cytochrome c oxidoreductase (cytochrome b-c1 complex, complex III, CIII) and cytochrome c oxidase (complex IV, CIV), that cooperate to transfer electrons derived from NADH and succinate to molecular oxygen, creating an electrochemical gradient over the inner membrane that drives transmembrane transport and the ATP synthase. Cytochrome c oxidase is the component of the respiratory chain that catalyzes the reduction of oxygen to water. Electrons originating from reduced cytochrome c in the intermembrane space (IMS) are transferred via the dinuclear copper A center (CU(A)) of subunit 2 and heme A of subunit 1 to the active site in subunit 1, a binuclear center (BNC) formed by heme A3 and copper B (CU(B)). The BNC reduces molecular oxygen to 2 water molecules using 4 electrons from cytochrome c in the IMS and 4 protons from the mitochondrial matrix. The protein is Cytochrome c oxidase subunit 2 (COII) of Mytilus edulis (Blue mussel).